Consider the following 384-residue polypeptide: S-adenosylmethionine synthase (384 aa).

Position 15 (His15) interacts with ATP. Asp17 provides a ligand contact to Mg(2+). K(+) is bound at residue Glu43. Glu56 and Gln99 together coordinate L-methionine. The segment at 99-109 is flexible loop; it reads QSPDINQGVDR. Residues 164–166, 230–231, Asp239, 245–246, Ala262, and Lys266 contribute to the ATP site; these read DAK, RF, and RK. Residue Asp239 participates in L-methionine binding. An L-methionine-binding site is contributed by Lys270.

It belongs to the AdoMet synthase family. As to quaternary structure, homotetramer; dimer of dimers. It depends on Mg(2+) as a cofactor. The cofactor is K(+).

It is found in the cytoplasm. The enzyme catalyses L-methionine + ATP + H2O = S-adenosyl-L-methionine + phosphate + diphosphate. Its pathway is amino-acid biosynthesis; S-adenosyl-L-methionine biosynthesis; S-adenosyl-L-methionine from L-methionine: step 1/1. In terms of biological role, catalyzes the formation of S-adenosylmethionine (AdoMet) from methionine and ATP. The overall synthetic reaction is composed of two sequential steps, AdoMet formation and the subsequent tripolyphosphate hydrolysis which occurs prior to release of AdoMet from the enzyme. This chain is S-adenosylmethionine synthase, found in Yersinia enterocolitica serotype O:8 / biotype 1B (strain NCTC 13174 / 8081).